The primary structure comprises 400 residues: MTLAFDIEARDPHSRARAGRITTAHGVIETPVFMPVGTRGSIKSLTPDEVRNHGAQIILGNTYHLYLQPGHELIARMGGLHHFMGWDGPILTDSGGFQVFSLVYGGIADEIKGRRPTQQVQPGMVKVTDDAVIFKSYIDGSMHVFTPERSIEIQKGIGADIILCFDELPPFHAGYDYTARSLERTHAWERRCLMFHRATQEGGLPFVPPNPYQALFGIVHGGVFPDLRRASAEYLRELPFDGLCIGGSLGENKQQMREVVDMTVPHMPDHLPRHLLGIGDVDDLIECVARGIDMFDCVSPTRLGRHGTALVRDAERRWKLNVANAALRDDPTPLDAWCDCYTCRRYSRAYIHHLFRAQELLGIRLVSLHNVAFLLKLMRTIRQSIIEGRFAHLRAEWLGI.

The active-site Proton acceptor is D93. Residues 93–97 (DSGGF), D166, and G247 contribute to the substrate site. Residues 277 to 283 (GIGDVDD) form an RNA binding region. The active-site Nucleophile is the D296. The tract at residues 301 to 305 (TRLGR) is RNA binding; important for wobble base 34 recognition. Residues C338, C340, C343, and H369 each coordinate Zn(2+).

This sequence belongs to the queuine tRNA-ribosyltransferase family. As to quaternary structure, homodimer. Within each dimer, one monomer is responsible for RNA recognition and catalysis, while the other monomer binds to the replacement base PreQ1. It depends on Zn(2+) as a cofactor.

The catalysed reaction is 7-aminomethyl-7-carbaguanine + guanosine(34) in tRNA = 7-aminomethyl-7-carbaguanosine(34) in tRNA + guanine. The protein operates within tRNA modification; tRNA-queuosine biosynthesis. In terms of biological role, catalyzes the base-exchange of a guanine (G) residue with the queuine precursor 7-aminomethyl-7-deazaguanine (PreQ1) at position 34 (anticodon wobble position) in tRNAs with GU(N) anticodons (tRNA-Asp, -Asn, -His and -Tyr). Catalysis occurs through a double-displacement mechanism. The nucleophile active site attacks the C1' of nucleotide 34 to detach the guanine base from the RNA, forming a covalent enzyme-RNA intermediate. The proton acceptor active site deprotonates the incoming PreQ1, allowing a nucleophilic attack on the C1' of the ribose to form the product. After dissociation, two additional enzymatic reactions on the tRNA convert PreQ1 to queuine (Q), resulting in the hypermodified nucleoside queuosine (7-(((4,5-cis-dihydroxy-2-cyclopenten-1-yl)amino)methyl)-7-deazaguanosine). The chain is Queuine tRNA-ribosyltransferase from Roseiflexus sp. (strain RS-1).